The primary structure comprises 87 residues: Transcriptional regulator PINT87aa (87 aa).

As to quaternary structure, interacts with PAF1 complex member PAF1. Interacts with transcription factor FOXM1. Expressed in brain, liver, kidney and stomach with lower levels in breast, intestine, thyroid and pancreas.

It is found in the nucleus. Its function is as follows. Enhances the binding of the PAF1 complex to target gene promoters and plays a role in negative regulation of transcription. May function as an anchor to keep the PAF1 complex on target gene promoters, sequentially pausing RNA polymerase II-induced mRNA elongation. Inhibits FOXM1-mediated transcription of PHB2. The chain is Transcriptional regulator PINT87aa from Homo sapiens (Human).